Reading from the N-terminus, the 205-residue chain is MVKLIASLLLLAVVAQAYGDFKCSLAVPEITKDWVDMKDACIKGMRNQIQEEINASYQYLAMGAYFSRDTVNRPGFAEHFFKAAKEEREHGSKLVEYLSMRGQLTEGVSDLINVPTVAKQEWTDGAAALSDALDLEIKVTKSIRKLIQTCENKPYNHYHLVDYLTGVYLEEQLHGQRELAGKLTTLKKMMDTNGELGEFLFDKTL.

A signal peptide spans 1 to 19 (MVKLIASLLLLAVVAQAYG). Residues 35 to 190 (VDMKDACIKG…GKLTTLKKMM (156 aa)) enclose the Ferritin-like diiron domain. Cys41 and Cys150 form a disulfide bridge. 5 residues coordinate Fe cation: Glu52, Glu87, His90, Glu136, and Gln172.

It belongs to the ferritin family. Oligomer of 12 light (L) chains and 12 heavy (H) chains; L and H chains are disulfide-linked. The functional molecule forms a roughly spherical shell with a diameter of 12 nm and contains a central cavity into which the insoluble ferric iron core is deposited. As to expression, expressed in hemolymph and gut (at protein level). Expressed in the head (at protein level). Expressed in thorax and abdomen.

It is found in the golgi apparatus. The protein resides in the secreted. The enzyme catalyses 4 Fe(2+) + O2 + 4 H(+) = 4 Fe(3+) + 2 H2O. Its function is as follows. Stores iron in a soluble, non-toxic, readily available form. Important for iron homeostasis. Iron is taken up in the ferrous form and deposited as ferric hydroxides after oxidation. Ferritin is composed of a heavy (H) chain which is responsible for the oxidation and uptake of ferrous iron, and a light (L) chain which facilitates the nucleation of the ferrihydrite iron core. Required for dietary iron absorption in the midgut. Involved in tissue iron detoxification by exporting excess iron. Functions as an antioxidant and protects the developing organs from cell-mediated ferroptosis. Required for embryo and larval development. Plays a role in blood cell (haemocyte) differentiation in the lymph gland at the larval stage. May also store Zn(2+) and Mn(2+) and thus may play a role in zinc and manganese homeostasis. This chain is Ferritin heavy chain, found in Drosophila melanogaster (Fruit fly).